The chain runs to 2326 residues: Telomere-associated protein RIF1 (2326 aa).

Disordered regions lie at residues 381 to 410, 1105 to 1965, and 1993 to 2050; these read QGTPSRVPSNPNSANPPQKPGPYPFASPAT, YTQS…CITP, and VENK…DDSL. Residues 382–396 show a composition bias toward polar residues; it reads GTPSRVPSNPNSANP. 2 stretches are compositionally biased toward basic and acidic residues: residues 1112 to 1126 and 1150 to 1182; these read SLEKSPLENAKEDFK and CKVDNPLEDVKEKSAYHIEKNSNSEEESSRGDR. Positions 1216-1225 are enriched in low complexity; it reads SAISCSSTSS. 2 stretches are compositionally biased toward polar residues: residues 1233 to 1242 and 1252 to 1270; these read QPASRRQSFI and SRPFSPSALNSVSEVSQSA. Positions 1290–1299 are enriched in basic and acidic residues; it reads KSGEESRKSS. 2 stretches are compositionally biased toward polar residues: residues 1318–1332 and 1341–1353; these read MEQQGNQQAKLVTNS and SFVSNSVENSPES. Over residues 1376 to 1402 the composition is skewed to basic and acidic residues; the sequence is PDIKKAEAVMAEIEKVRAFEMDSKENT. Positions 1403–1412 are enriched in polar residues; the sequence is PPKTAVSSEQ. Composition is skewed to basic and acidic residues over residues 1448–1480, 1489–1511, and 1519–1539; these read QDKEDGYQKKDKRKEDEKALQKKVPQTKEDASQ, ASEHAIKKESSLPERSAAEDLGS, and GADEEANRSAGKPEDTLKSDS. The span at 1564 to 1573 shows a compositional bias: polar residues; sequence SSQGLLSSIE. A compositionally biased stretch (basic residues) spans 1586–1595; it reads SLKKKSGKTK. Positions 1596–1609 are enriched in basic and acidic residues; that stretch reads NKSDSLEGKRKDVQ. Polar residues-rich tracts occupy residues 1610 to 1640 and 1671 to 1683; these read PESQSHGVSSQVDESKNLSGMNESELSSEVS and RTSPSTQNVSVEQ. Residues 1697 to 1712 show a composition bias toward basic and acidic residues; that stretch reads RVSDEVLKGDENKCIE. A compositionally biased stretch (polar residues) spans 1713 to 1745; that stretch reads KQSSVEQHSSVQPENVQGANTSGSDLSSLQMQD. A compositionally biased stretch (basic and acidic residues) spans 1776–1785; it reads SKSEDPRELI. The segment covering 1795 to 1813 has biased composition (polar residues); that stretch reads AVSTAEVSGSSNLEESLSI. Basic and acidic residues-rich tracts occupy residues 1869-1884, 1908-1925, and 1932-1954; these read VEIKVKEEVDGNDRAE, SEEKAAVEKEEESQHGEM, and DGSKPETKQMDELEGNRDGKEEA. Residues 2009–2036 are compositionally biased toward polar residues; that stretch reads SFTSVNGSPSGVQARCTWSPSASPSTSI.

It belongs to the RIF1 family. As to quaternary structure, interacts with TP53BP1 (when phosphorylated by ATM).

It localises to the nucleus. The protein localises to the chromosome. Its subcellular location is the telomere. It is found in the cytoplasm. The protein resides in the cytoskeleton. It localises to the spindle. Functionally, key regulator of TP53BP1 that plays a key role in the repair of double-strand DNA breaks (DSBs) in response to DNA damage: acts by promoting non-homologous end joining (NHEJ)-mediated repair of DSBs. In response to DNA damage, interacts with ATM-phosphorylated TP53BP1, allowing recruitment to DNA DSBs. Once recruited to DSBs, RIF1 and TP53BP1 act by promoting NHEJ-mediated repair of DSBs. In the same time, RIF1 and TP53BP1 specifically counteract DSBs resection via homologous recombination (HR) during G1 phase. The protein is Telomere-associated protein RIF1 of Gallus gallus (Chicken).